The sequence spans 1940 residues: Myosin-3 (1940 aa).

Positions D33 to P82 constitute a Myosin N-terminal SH3-like domain. Residues D86–D779 form the Myosin motor domain. An N6,N6,N6-trimethyllysine modification is found at K130. G179 to T186 is a binding site for ATP. Actin-binding regions lie at residues L656–E678 and K758–G772. The IQ domain maps to L782–S811. Residues L841–F1928 are a coiled coil. Positions A1260–S1289 are disordered. Over residues R1269–Q1282 the composition is skewed to polar residues.

The protein belongs to the TRAFAC class myosin-kinesin ATPase superfamily. Myosin family. Muscle myosin is a hexameric protein that consists of 2 heavy chain subunits (MHC), 2 alkali light chain subunits (MLC) and 2 regulatory light chain subunits (MLC-2).

Its subcellular location is the cytoplasm. The protein localises to the myofibril. Muscle contraction. This Mus musculus (Mouse) protein is Myosin-3 (Myh3).